Reading from the N-terminus, the 387-residue chain is S-adenosylmethionine synthase (387 aa).

ATP is bound at residue histidine 15. Residue aspartate 17 coordinates Mg(2+). Glutamate 43 contributes to the K(+) binding site. Positions 56 and 99 each coordinate L-methionine. The tract at residues 99-109 (QSPDIALGVNR) is flexible loop. Residues 166–168 (DAK), 232–233 (RF), aspartate 241, 247–248 (RK), alanine 264, and lysine 268 contribute to the ATP site. Aspartate 241 is a binding site for L-methionine. Lysine 272 lines the L-methionine pocket.

It belongs to the AdoMet synthase family. In terms of assembly, homotetramer; dimer of dimers. Mg(2+) is required as a cofactor. Requires K(+) as cofactor.

Its subcellular location is the cytoplasm. The catalysed reaction is L-methionine + ATP + H2O = S-adenosyl-L-methionine + phosphate + diphosphate. The protein operates within amino-acid biosynthesis; S-adenosyl-L-methionine biosynthesis; S-adenosyl-L-methionine from L-methionine: step 1/1. Catalyzes the formation of S-adenosylmethionine (AdoMet) from methionine and ATP. The overall synthetic reaction is composed of two sequential steps, AdoMet formation and the subsequent tripolyphosphate hydrolysis which occurs prior to release of AdoMet from the enzyme. This is S-adenosylmethionine synthase from Nitrosomonas eutropha (strain DSM 101675 / C91 / Nm57).